The chain runs to 319 residues: G-protein coupled receptor 55 (319 aa).

At 1–21 (MSQQNTSGDCLFDGVNELMKT) the chain is on the extracellular side. The N-linked (GlcNAc...) asparagine glycan is linked to asparagine 5. The chain crosses the membrane as a helical span at residues 22-42 (LQFAVHIPTFVLGLLLNLLAI). Over 43–58 (HGFSTFLKNRWPDYAA) the chain is Cytoplasmic. A helical transmembrane segment spans residues 59–79 (TSIYMINLAVFDLLLVLSLPF). Residues 80-94 (KMVLSQVQSPFPSLC) lie on the Extracellular side of the membrane. A helical membrane pass occupies residues 95 to 115 (TLVECLYFVSMYGSVFTICFI). Over 116-137 (SMDRFLAIRYPLLVSHLRSPRK) the chain is Cytoplasmic. A helical membrane pass occupies residues 138 to 158 (IFGICCTIWVLVWTGSIPIYS). Over 159–180 (FHGKVEKYMCFHNMSDDTWSAK) the chain is Extracellular. Asparagine 171 is a glycosylation site (N-linked (GlcNAc...) asparagine). Residues 181-201 (VFFPLEVFGFLLPMGIMGFCC) form a helical membrane-spanning segment. At 202 to 231 (SRSIHILLGRRDHTQDWVQQKACIYSIAAS) the chain is on the cytoplasmic side. Residues 232–252 (LAVFVVSFLPVHLGFFLQFLV) form a helical membrane-spanning segment. The Extracellular segment spans residues 253-271 (RNSFIVECRAKQSISFFLQ). A helical transmembrane segment spans residues 272-292 (LSMCFSNVNCCLDVFCYYFVI). The Cytoplasmic segment spans residues 293–319 (KEFRMNIRAHRPSRVQLVLQDTTISRG).

Belongs to the G-protein coupled receptor 1 family. In terms of tissue distribution, expressed in the caudate nucleus and putamen, but not detected in the hippocampus, thalamus, pons cerebellum, frontal cortex of the brain or in the liver. Expressed in osteoclasts and osteoblasts. Higly expressed in macrophages and B-cells.

It localises to the cell membrane. G-protein coupled receptor that binds to several ligands including 2-arachidonoyl lysophosphatidylinositol or lysophosphatidylglucoside with high affinity, leading to rapid and transient activation of numerous intracellular signaling pathways. Induces the Ca(2+) release from intracellular stores via ERK, the heterotrimeric G protein GNA13 and RHOA leading to morphological changes including cell rounding and stress fiber formation. In macrophages, acts downstream of lysophosphatidylglucoside to inhibit the translocation of the phospholipid-transporting ABCA1 to plasma membrane and subsequent cholesterol efflux leading to lipid accumulation and foam cell formation. This chain is G-protein coupled receptor 55 (GPR55), found in Homo sapiens (Human).